Consider the following 1209-residue polypeptide: Protein phosphatase 1 regulatory subunit 26 (1209 aa).

Disordered stretches follow at residues 57-91 (DGAARGTSDERAAQRGHRAEGCHDARPAAKPTVHK), 145-279 (SGAA…HRQG), 291-471 (KPPR…VERS), 501-532 (GSDGSLSASPLFYSPNVPSRSDGDSSSVDSDD), 555-694 (GESC…EDLD), 733-836 (EQLG…SNDS), 848-1033 (KAKE…FAHQ), 1052-1072 (RGGVGSERDKGSEGPARGLPS), and 1118-1209 (AFRE…VVKV). The span at 63–91 (TSDERAAQRGHRAEGCHDARPAAKPTVHK) shows a compositional bias: basic and acidic residues. Residues 201-219 (QVGSSKDQGSASPVSVSSD) are compositionally biased toward low complexity. Residues 226-255 (IRAEIEQFLNEKRQHETQKCDGSVEKKPDT) show a composition bias toward basic and acidic residues. The segment covering 301–321 (QPRSLRSKVTTTQENEGSTKP) has biased composition (polar residues). Residues 352–362 (SAAQASEASDS) are compositionally biased toward low complexity. The span at 442-454 (DTDHAPKLLKETK) shows a compositional bias: basic and acidic residues. 3 stretches are compositionally biased toward basic and acidic residues: residues 609–637 (KMQEVVKDGSQDADHSQGRAEPGHERRDL), 667–685 (KTDEARRLDEKESSEDKSS), and 757–766 (SKRDSGEGPG). Composition is skewed to low complexity over residues 821–836 (PGSLSDDSSSVDSNDS) and 852–861 (SVSSSEVQAE). S1161 carries the phosphoserine modification. Residues 1187-1209 (GSDASDFSDTSTEDSGGSSVVKV) are compositionally biased toward low complexity.

As to quaternary structure, interacts with UTP20 and PPP1CA. In terms of tissue distribution, ubiquitous in normal tissues. Expressed in numerous adenocarcinoma cell lines.

Its subcellular location is the nucleus. It is found in the nucleolus. Inhibits phosphatase activity of protein phosphatase 1 (PP1) complexes. May positively regulate cell proliferation. In Homo sapiens (Human), this protein is Protein phosphatase 1 regulatory subunit 26 (PPP1R26).